The following is a 238-amino-acid chain: Ribitol-5-phosphate cytidylyltransferase (238 aa).

CTP contacts are provided by residues 7 to 10 (LAGG) and 81 to 87 (GDDRNHS).

It belongs to the IspD/TarI cytidylyltransferase family. TarI subfamily.

The enzyme catalyses D-ribitol 5-phosphate + CTP + H(+) = CDP-L-ribitol + diphosphate. It functions in the pathway cell wall biogenesis; poly(ribitol phosphate) teichoic acid biosynthesis. Catalyzes the transfer of the cytidylyl group of CTP to D-ribitol 5-phosphate. This chain is Ribitol-5-phosphate cytidylyltransferase, found in Staphylococcus epidermidis (strain ATCC 12228 / FDA PCI 1200).